The following is a 786-amino-acid chain: Endonuclease MutS2 (786 aa).

332 to 339 serves as a coordination point for ATP; it reads GPNTGGKT. One can recognise a Smr domain in the interval 711 to 786; sequence IDLRGMDSEE…GTGVTVVILK (76 aa).

It belongs to the DNA mismatch repair MutS family. MutS2 subfamily. As to quaternary structure, homodimer. Binds to stalled ribosomes, contacting rRNA.

In terms of biological role, endonuclease that is involved in the suppression of homologous recombination and thus may have a key role in the control of bacterial genetic diversity. Acts as a ribosome collision sensor, splitting the ribosome into its 2 subunits. Detects stalled/collided 70S ribosomes which it binds and splits by an ATP-hydrolysis driven conformational change. Acts upstream of the ribosome quality control system (RQC), a ribosome-associated complex that mediates the extraction of incompletely synthesized nascent chains from stalled ribosomes and their subsequent degradation. Probably generates substrates for RQC. This Clostridium perfringens (strain 13 / Type A) protein is Endonuclease MutS2.